A 480-amino-acid polypeptide reads, in one-letter code: Probable histone deacetylase 1-A (480 aa).

The segment at 10 to 321 (KVCYYYDGDV…WTYETAVALD (312 aa)) is histone deacetylase. The active site involves histidine 141. The segment at 388–480 (SIHDDSGEED…KRVKEETKSV (93 aa)) is disordered. Basic and acidic residues predominate over residues 401-416 (PDKRISIRSSDKRIAC). Acidic residues predominate over residues 417–427 (DEEFSDSEDEG). Positions 443-480 (VKTEEEKEGEDKKDVKEEEKAKDEKTDSKRVKEETKSV) are enriched in basic and acidic residues.

It belongs to the histone deacetylase family. HD type 1 subfamily. Part of a large multiprotein complex that also contains RBBP4. As to expression, oocyte.

It localises to the nucleus. It is found in the cytoplasm. It carries out the reaction N(6)-acetyl-L-lysyl-[histone] + H2O = L-lysyl-[histone] + acetate. The catalysed reaction is N(6)-acetyl-L-lysyl-[protein] + H2O = L-lysyl-[protein] + acetate. It catalyses the reaction N(6)-(2E)-butenoyl-L-lysyl-[protein] + H2O = (2E)-2-butenoate + L-lysyl-[protein]. Histone deacetylase that catalyzes the deacetylation of lysine residues on the N-terminal part of the core histones (H2A, H2B, H3 and H4). Histone deacetylation gives a tag for epigenetic repression and plays an important role in transcriptional regulation, cell cycle progression and developmental events. Histone deacetylases act via the formation of large multiprotein complexes. Also functions as deacetylase for non-histone proteins. In addition to protein deacetylase activity, also has protein-lysine deacylase activity: acts as a protein decrotonylase by mediating decrotonylation ((2E)-butenoyl) of histones. This Xenopus laevis (African clawed frog) protein is Probable histone deacetylase 1-A (hdac1-a).